Here is a 125-residue protein sequence, read N- to C-terminus: Small ribosomal subunit protein uS13 (125 aa).

The tract at residues 93-125 is disordered; sequence RAGLPVRGQRTRTNARTRRGARKTVAGKKKATR. The span at 101–125 shows a compositional bias: basic residues; the sequence is QRTRTNARTRRGARKTVAGKKKATR.

The protein belongs to the universal ribosomal protein uS13 family. In terms of assembly, part of the 30S ribosomal subunit. Forms a loose heterodimer with protein S19. Forms two bridges to the 50S subunit in the 70S ribosome.

In terms of biological role, located at the top of the head of the 30S subunit, it contacts several helices of the 16S rRNA. In the 70S ribosome it contacts the 23S rRNA (bridge B1a) and protein L5 of the 50S subunit (bridge B1b), connecting the 2 subunits; these bridges are implicated in subunit movement. Contacts the tRNAs in the A and P-sites. This Synechococcus elongatus (strain ATCC 33912 / PCC 7942 / FACHB-805) (Anacystis nidulans R2) protein is Small ribosomal subunit protein uS13.